Consider the following 179-residue polypeptide: Putative ankyrin repeat protein RF_0922 (179 aa).

5 ANK repeats span residues 5–34, 40–72, 75–104, 110–139, and 145–174; these read KGCTALTWAVDKGLEKVCEILIPNMSEQAI, NGSTALTLAAWKGLEKICRLLIPKMSPQAINHV, NGNTALTLAAWKGLEKICELLIPKMSSQAI, NGDTALTLAAWKGLEKICEMLIPKMSEQAI, and NGNTALTLAADKSLEKICEMLIPKMSKQAI.

The protein is Putative ankyrin repeat protein RF_0922 of Rickettsia felis (strain ATCC VR-1525 / URRWXCal2) (Rickettsia azadi).